Consider the following 327-residue polypeptide: NF-kappa-B inhibitor delta (327 aa).

Residues 1-40 (MEDSLDTRLYPEPSLSQVGSWRVSSLPSGSPQLPSPTGPS) are disordered. A compositionally biased stretch (polar residues) spans 14-23 (SLSQVGSWRV). ANK repeat units lie at residues 62 to 97 (EGDT…IREH), 98 to 127 (KGKT…EPNA), 131 to 160 (QGRS…QVDL), 166 to 215 (EGLT…SHTS), 220 to 250 (SNKT…DLRA), and 257 to 290 (HGNT…DPTL). The segment at 293-327 (LENEQPVHLLRPGPGPEGLRQLLKRSRTAPPGLSS) is disordered.

This sequence belongs to the NF-kappa-B inhibitor family. As to quaternary structure, interacts with NFKB1, RELA and RELB; in the nucleus. Specifically expressed in spleen and at low levels in thymus. Expressed in a population of antigen-presenting dendritic cells which may act as regulators of systemic inflammatory response.

The protein resides in the nucleus. In terms of biological role, regulates the expression of IL-2, IL-6, and other cytokines through regulation on NF-kappa-B activity. Functions in the regulation of inflammatory responses. Involved in the induction of T helper 17 cells (Th17) differentiation upon recognition of antigen by T cell antigen receptor (TCR). According to PubMed:11931770, it may also regulate TCR-induced negative selection of thymocytes. The chain is NF-kappa-B inhibitor delta (Nfkbid) from Mus musculus (Mouse).